The chain runs to 766 residues: Dipeptidyl peptidase 4 (766 aa).

The Cytoplasmic segment spans residues 1-6 (MKTPWK). Residues 7–28 (VLLGLLGAAALVTIITVPVVLL) traverse the membrane as a helical; Signal-anchor for type II membrane protein segment. The Extracellular portion of the chain corresponds to 29–766 (NKGTDDATAD…HFIKQCFSLP (738 aa)). N-linked (GlcNAc...) asparagine glycosylation is found at Asn85, Asn92, Asn150, Asn219, Asn229, Asn281, and Asn321. 4 disulfides stabilise this stretch: Cys328–Cys339, Cys385–Cys394, Cys444–Cys447, and Cys454–Cys472. N-linked (GlcNAc...) asparagine glycosylation is present at Asn520. Residue Ser630 is the Charge relay system of the active site. The cysteines at positions 649 and 762 are disulfide-linked. Asn685 carries an N-linked (GlcNAc...) asparagine glycan. Catalysis depends on charge relay system residues Asp708 and His740.

This sequence belongs to the peptidase S9B family. DPPIV subfamily. As to quaternary structure, monomer. Homodimer. Heterodimer with Seprase (FAP). Requires homodimerization for optimal dipeptidyl peptidase activity and T-cell costimulation. Found in a membrane raft complex, at least composed of BCL10, CARD11, DPP4 and IKBKB. Associates with collagen. Interacts with PTPRC; the interaction is enhanced in an interleukin-12-dependent manner in activated lymphocytes. Interacts (via extracellular domain) with ADA; does not inhibit its dipeptidyl peptidase activity. Interacts with CAV1 (via the N-terminus); the interaction is direct. Interacts (via cytoplasmic tail) with CARD11 (via PDZ domain); its homodimerization is necessary for interaction with CARD11. Interacts with IGF2R; the interaction is direct. Interacts with GPC3. Interacts with human coronavirus-EMC spike protein and acts as a receptor for this virus. In terms of assembly, (Microbial infection) Interacts with MERS coronavirus/MERS-CoV spike protein. In terms of processing, the soluble form (Dipeptidyl peptidase 4 soluble form also named SDPP) derives from the membrane form (Dipeptidyl peptidase 4 membrane form also named MDPP) by proteolytic processing. N- and O-Glycosylated. Post-translationally, phosphorylated. Mannose 6-phosphate residues in the carbohydrate moiety are necessary for interaction with IGF2R in activated T-cells. Mannose 6-phosphorylation is induced during T-cell activation. Expressed specifically in lymphatic vessels but not in blood vessels in the skin, small intestine, esophagus, ovary, breast and prostate glands. Not detected in lymphatic vessels in the lung, kidney, uterus, liver and stomach (at protein level). Expressed in the poorly differentiated crypt cells of the small intestine as well as in the mature villous cells. Expressed at very low levels in the colon.

Its subcellular location is the secreted. It is found in the cell membrane. It localises to the apical cell membrane. The protein localises to the cell projection. The protein resides in the invadopodium membrane. Its subcellular location is the lamellipodium membrane. It is found in the cell junction. It localises to the membrane raft. The catalysed reaction is Release of an N-terminal dipeptide, Xaa-Yaa-|-Zaa-, from a polypeptide, preferentially when Yaa is Pro, provided Zaa is neither Pro nor hydroxyproline.. Inhibited by GPC3 and diprotin A. Cell surface glycoprotein receptor involved in the costimulatory signal essential for T-cell receptor (TCR)-mediated T-cell activation. Acts as a positive regulator of T-cell coactivation, by binding at least ADA, CAV1, IGF2R, and PTPRC. Its binding to CAV1 and CARD11 induces T-cell proliferation and NF-kappa-B activation in a T-cell receptor/CD3-dependent manner. Its interaction with ADA also regulates lymphocyte-epithelial cell adhesion. In association with FAP is involved in the pericellular proteolysis of the extracellular matrix (ECM), the migration and invasion of endothelial cells into the ECM. May be involved in the promotion of lymphatic endothelial cells adhesion, migration and tube formation. When overexpressed, enhanced cell proliferation, a process inhibited by GPC3. Also acts as a serine exopeptidase with a dipeptidyl peptidase activity that regulates various physiological processes by cleaving peptides in the circulation, including many chemokines, mitogenic growth factors, neuropeptides and peptide hormones such as brain natriuretic peptide 32. Removes N-terminal dipeptides sequentially from polypeptides having unsubstituted N-termini provided that the penultimate residue is proline. Its function is as follows. (Microbial infection) Acts as a receptor for human coronavirus MERS-CoV-2. This is Dipeptidyl peptidase 4 from Homo sapiens (Human).